A 390-amino-acid polypeptide reads, in one-letter code: Aspartate carbamoyltransferase, chloroplastic (390 aa).

The transit peptide at 1–68 directs the protein to the chloroplast; it reads MSIASSLTSA…NLTRNVGPVR (68 aa). Carbamoyl phosphate-binding residues include arginine 136 and threonine 137. 2 residues coordinate UMP: arginine 136 and threonine 137. Lysine 166 contacts L-aspartate. Residues arginine 187, histidine 215, and glutamine 218 each contribute to the carbamoyl phosphate site. Positions 187 and 215 each coordinate UMP. Positions 248 and 310 each coordinate UMP. Arginine 248 and arginine 310 together coordinate L-aspartate. Carbamoyl phosphate is bound by residues leucine 350 and proline 351.

This sequence belongs to the aspartate/ornithine carbamoyltransferase superfamily. ATCase family. As to quaternary structure, homotrimer.

Its subcellular location is the plastid. It is found in the chloroplast. The catalysed reaction is carbamoyl phosphate + L-aspartate = N-carbamoyl-L-aspartate + phosphate + H(+). It participates in pyrimidine metabolism; UMP biosynthesis via de novo pathway; (S)-dihydroorotate from bicarbonate: step 2/3. Feedback inhibited by UMP. Its function is as follows. Catalyzes the condensation of carbamoyl phosphate and aspartate to form carbamoyl aspartate and inorganic phosphate, the committed step in the de novo pyrimidine nucleotide biosynthesis pathway. This chain is Aspartate carbamoyltransferase, chloroplastic (PYRB), found in Arabidopsis thaliana (Mouse-ear cress).